The sequence spans 61 residues: Large ribosomal subunit protein bL28 (61 aa).

Belongs to the bacterial ribosomal protein bL28 family.

In Lactobacillus johnsonii (strain CNCM I-12250 / La1 / NCC 533), this protein is Large ribosomal subunit protein bL28.